The following is a 513-amino-acid chain: Cytochrome P450 72A552 (513 aa).

A helical transmembrane segment spans residues 2 to 22; sequence EISVASVTVSVVIAVVTWWVW. Position 460 (Cys460) interacts with heme.

Belongs to the cytochrome P450 family. The cofactor is heme.

It localises to the membrane. It catalyses the reaction oleanolate + reduced [NADPH--hemoprotein reductase] + O2 = hederagenin + oxidized [NADPH--hemoprotein reductase] + H2O + H(+). Functionally, catalyzes the oxidation of oleanolate at the C-23 position to form hederagenin. The polypeptide is Cytochrome P450 72A552 (Barbarea vulgaris (Yellow rocket)).